The primary structure comprises 438 residues: Plasmalemma vesicle-associated protein (438 aa).

The Cytoplasmic segment spans residues 1 to 26 (MGLSMDRSPYARTGDQQRGCWYYLRY). Residues 27-47 (FFLFVSLIQFLIILGLVLFMI) traverse the membrane as a helical; Signal-anchor for type II membrane protein segment. Topologically, residues 48 to 438 (YGNVHATTES…VVNPAAQPSG (391 aa)) are extracellular. N-linked (GlcNAc...) asparagine glycans are attached at residues asparagine 82, asparagine 88, asparagine 112, and asparagine 150. Coiled coils occupy residues 140–160 (KQCQEQLKEVNKTCEALLFKL), 189–224 (KRQTEEQLEACGKARERQQQEQQVTEENLRKVQSLC), and 281–383 (EELA…ISAL). The segment at 391–413 (SLPAVPPRVSGPPPNPPPIDPAS) is disordered. A compositionally biased stretch (pro residues) spans 394–410 (AVPPRVSGPPPNPPPID).

Homodimer. Expressed in lung, kidney, spleen, heart, muscle, eye, pancreas, thyroid, thymus, submaxillary gland, prostate, epididymis, uterus and liver.

The protein localises to the cell membrane. Its subcellular location is the membrane. The protein resides in the caveola. It localises to the cytoplasm. It is found in the perinuclear region. In terms of biological role, endothelial cell-specific membrane protein involved in the formation of the diaphragms that bridge endothelial fenestrae. It is also required for the formation of stomata of caveolae and transendothelial channels. Functions in microvascular permeability, endothelial fenestrae contributing to the passage of water and solutes and regulating transcellular versus paracellular flow in different organs. Plays a specific role in embryonic development. This chain is Plasmalemma vesicle-associated protein (Plvap), found in Mus musculus (Mouse).